The following is a 237-amino-acid chain: Opacity protein opA57 (237 aa).

Residue A1 is a signal peptide.

This sequence belongs to the opacity porin family.

Its subcellular location is the cell outer membrane. Its function is as follows. Implicated in a number of adherence functions. OPA proteins are implicated in pathogenesis and are subject to phase variation. The protein is Opacity protein opA57 (opaK) of Neisseria gonorrhoeae.